A 450-amino-acid polypeptide reads, in one-letter code: MSLLQFSGLFVVWLLCTLFIATLTWFEFRRVRFNFNVFFSLLFLLTFFFGFPLTSVLVFRFDVGVAPPEILLQALLSAGCFYAVYYVTYKTRLRKRTTDVPRRPLFTMNRVETNLTWVILMGIALVSVGIFFMHNGFLLFRLNSYSQIFSSEVSGVALKRFFYFFIPAMLVVYFLRQDSKAWLFFLVSTVAFGLLTYMIVGGTRANIIIAFAIFLFIGIIRGWISLWMLAAAGVLGIVGMFWLALKRYGMNVSGDEAFYTFLYLTRDTFSPWENLALLLQNYDNIDFQGLAPIVRDFYVFIPSWLWPGRPSMVLNSANYFTWEVLNNHSGLAISPTLIGSLVVMGGALFIPLGAIVVGLIIKWFDWLYELGNRETNRYKAAILHSFCFGAIFNMIVLAREGLDSFVSRVVFFIVVFGACLMIAKLLYWLFESAGLIHKRTKSSLRTQVEG.

A run of 11 helical transmembrane segments spans residues 6–26, 37–57, 63–83, 118–138, 155–175, 181–201, 207–227, 228–248, 341–361, 378–398, and 410–430; these read FSGL…LTWF, VFFS…TSVL, VGVA…CFYA, VILM…NGFL, GVAL…VYFL, AWLF…MIVG, IIIA…ISLW, MLAA…LKRY, LVVM…GLII, YKAA…IVLA, and VFFI…YWLF.

This sequence belongs to the WzyE family. Probably part of a complex composed of WzxE, WzyE and WzzE.

The protein resides in the cell inner membrane. It functions in the pathway bacterial outer membrane biogenesis; enterobacterial common antigen biosynthesis. Functionally, probably involved in the polymerization of enterobacterial common antigen (ECA) trisaccharide repeat units. This chain is Probable ECA polymerase, found in Escherichia fergusonii (strain ATCC 35469 / DSM 13698 / CCUG 18766 / IAM 14443 / JCM 21226 / LMG 7866 / NBRC 102419 / NCTC 12128 / CDC 0568-73).